The chain runs to 458 residues: Exodeoxyribonuclease 7 large subunit (458 aa).

The protein belongs to the XseA family. As to quaternary structure, heterooligomer composed of large and small subunits.

The protein localises to the cytoplasm. It catalyses the reaction Exonucleolytic cleavage in either 5'- to 3'- or 3'- to 5'-direction to yield nucleoside 5'-phosphates.. Bidirectionally degrades single-stranded DNA into large acid-insoluble oligonucleotides, which are then degraded further into small acid-soluble oligonucleotides. The chain is Exodeoxyribonuclease 7 large subunit from Escherichia coli O6:H1 (strain CFT073 / ATCC 700928 / UPEC).